The following is a 179-amino-acid chain: Oryzines biosynthesis cluster protein J (179 aa).

The Cupin type-2 domain occupies 88-148 (YVDYHPGCEP…NHCWRNPSKT (61 aa)).

It belongs to the oryJ family.

It functions in the pathway secondary metabolite biosynthesis. Part of the gene cluster that mediates the biosynthesis of oryzines, natural products with an unusual maleidride backbone. The two subunits of the fungal fatty acid synthase oryfasA and oryfasB probably form octenoic acid. This fatty acid is most likely activated by the acyl-CoA ligase oryP to give octenyl-CoA before the citrate synthase-like protein oryE catalyzes condensation with oxaloacetate to form tricarboxylic acid. The next steps of the pathways are conjectural, but a favorite possible route has been proposed, beginning with decarboxylation and concomitant dehydration by the decarboxylase oryM, followed by tautomerization, which may lead to the production of a diene intermediate. Reduction of this diene intermediate could give the known metabolite piliformic acid. On the pathway to oryzine B and oryzine A, however, hydroxylation of the diene by the alpha-ketoglutarate-dependent dioxygenase oryG and lactonisation by the lactonohydrolases oryH or oryL could give oryzine B directly. Finally, enoyl reduction by the dehydrogenase oryD would then convert oryzine B into oryzine A. The protein is Oryzines biosynthesis cluster protein J of Aspergillus oryzae (strain ATCC 42149 / RIB 40) (Yellow koji mold).